The chain runs to 613 residues: Zinc metalloproteinase-disintegrin-like EoVMP2 (613 aa).

The N-terminal stretch at 1 to 20 is a signal peptide; it reads MMQVLLVTICLAVFPYQGSS. Residues 21-194 constitute a propeptide that is removed on maturation; it reads IILESGNVND…EASQLFATSE (174 aa). Gln195 bears the Pyrrolidone carboxylic acid mark. A Peptidase M12B domain is found at 201-397; the sequence is RYIEFFIVVD…RNPKCMINKP (197 aa). Glu204 contributes to the Ca(2+) binding site. Asn219 is a glycosylation site (N-linked (GlcNAc...) asparagine). Ca(2+) is bound at residue Asp288. 3 disulfides stabilise this stretch: Cys312/Cys392, Cys352/Cys376, and Cys354/Cys359. His337 is a Zn(2+) binding site. Glu338 is an active-site residue. Zn(2+) contacts are provided by His341 and His347. Asn375 is a glycosylation site (N-linked (GlcNAc...) asparagine). Ca(2+) is bound by residues Cys392, Asn395, Val407, Asn410, Leu412, Glu414, Glu417, and Asp420. Residues 405–491 form the Disintegrin domain; that stretch reads PPVCGNGLLE…DCPIDGFHAN (87 aa). Cystine bridges form between Cys408–Cys437, Cys419–Cys432, Cys421–Cys427, Cys431–Cys454, Cys445–Cys451, Cys450–Cys476, Cys463–Cys483, Cys470–Cys502, Cys495–Cys507, Cys514–Cys564, Cys529–Cys575, Cys542–Cys552, Cys559–Cys601, and Cys595–Cys606. Residues 469–471 carry the D/ECD-tripeptide motif; the sequence is DCD.

This sequence belongs to the venom metalloproteinase (M12B) family. P-III subfamily. P-IIIa sub-subfamily. Monomer. The cofactor is Zn(2+). Expressed by the venom gland.

The protein resides in the secreted. In terms of biological role, snake venom zinc metalloprotease that possesses high hemorrhagic activity. It inhibits collagen-induced platelet aggregation and activates prothrombin (F2). The protein is Zinc metalloproteinase-disintegrin-like EoVMP2 (Svmp3-Eoc22) of Echis ocellatus (Ocellated saw-scaled viper).